Reading from the N-terminus, the 310-residue chain is Olfactory receptor 2A7 (310 aa).

Topologically, residues 1–24 (MGNNMTLITEFILLGFPLSPRMQM) are extracellular. Residue asparagine 4 is glycosylated (N-linked (GlcNAc...) asparagine). The chain crosses the membrane as a helical span at residues 25 to 45 (LLFALFSLFYAFTLLGNGTIV). Residues 46-53 (GLICLDSR) are Cytoplasmic-facing. The chain crosses the membrane as a helical span at residues 54-74 (LHTPMYFFLSHLAIVDIAYAC). Over 75-96 (NTVPQMLVNLLDPVKPISYAGC) the chain is Extracellular. Cysteine 96 and cysteine 178 are joined by a disulfide. The helical transmembrane segment at 97–117 (MTQTFLFLTFAITECLLLVVM) threads the bilayer. Residues 118–148 (SYDRYVAICHPLRYSAIMSWRVCSTMAVTSW) are Cytoplasmic-facing. A helical transmembrane segment spans residues 149 to 169 (IIGVLLSLIHLVLLLPLPFCV). Residues 170 to 204 (SQKVNHFFCEITAILKLACADTHLNETMVLAGAVS) lie on the Extracellular side of the membrane. An N-linked (GlcNAc...) asparagine glycan is attached at asparagine 194. The helical transmembrane segment at 205–225 (VLVGPFSSIVVSYACILGAIL) threads the bilayer. Residues 226–239 (KIQSEEGQRKAFST) are Cytoplasmic-facing. The helical transmembrane segment at 240–260 (CSSHLCVVGLFYGTAIVMYVG) threads the bilayer. The Extracellular segment spans residues 261-273 (PRHGSPKEQKKYL). The chain crosses the membrane as a helical span at residues 274 to 291 (LLFHSLFNPMLNPLIYSL). Residues 292 to 310 (RNSDVKNTLKRVLRTQRAL) lie on the Cytoplasmic side of the membrane.

The protein belongs to the G-protein coupled receptor 1 family. In terms of tissue distribution, olfactory epithelium.

It localises to the cell membrane. In terms of biological role, odorant receptor. In Mus musculus (Mouse), this protein is Olfactory receptor 2A7.